The primary structure comprises 868 residues: Translation initiation factor IF-2 (868 aa).

Composition is skewed to basic and acidic residues over residues 156–166 and 199–209; these read ETVKEEEKINS and SKKEEVKPEKV. 2 disordered regions span residues 156-177 and 199-269; these read ETVK…QDEL and SKKE…KYRE. The segment covering 249-260 has biased composition (basic residues); the sequence is RGGRSKFKKKKG. Residues 368–537 form the tr-type G domain; that stretch reads GRAPVVTIMG…LLQSEVLELK (170 aa). Positions 377–384 are G1; the sequence is GHVDHGKT. Residue 377–384 participates in GTP binding; it reads GHVDHGKT. The G2 stretch occupies residues 402-406; it reads GITQH. Residues 423–426 are G3; sequence DTPG. Residues 423–427 and 477–480 contribute to the GTP site; these read DTPGH and NKMD. Residues 477 to 480 are G4; it reads NKMD. The tract at residues 513–515 is G5; it reads SAK.

This sequence belongs to the TRAFAC class translation factor GTPase superfamily. Classic translation factor GTPase family. IF-2 subfamily.

It is found in the cytoplasm. Functionally, one of the essential components for the initiation of protein synthesis. Protects formylmethionyl-tRNA from spontaneous hydrolysis and promotes its binding to the 30S ribosomal subunits. Also involved in the hydrolysis of GTP during the formation of the 70S ribosomal complex. This chain is Translation initiation factor IF-2, found in Legionella pneumophila subsp. pneumophila (strain Philadelphia 1 / ATCC 33152 / DSM 7513).